Here is a 290-residue protein sequence, read N- to C-terminus: Membrane protein insertase YidC 1 (290 aa).

A signal peptide spans 1 to 19 (MKKKALLPLFLGIMIFLAG). Cysteine 20 carries the N-palmitoyl cysteine lipid modification. Residue cysteine 20 is the site of S-diacylglycerol cysteine attachment. A run of 5 helical transmembrane segments spans residues 56–76 (FGLA…PFML), 134–154 (MLGC…YFVL), 176–196 (PDIW…VVSS), 211–231 (MVIS…ALGL), and 232–252 (YWSV…IYYS). The disordered stretch occupies residues 270 to 290 (HNPYSKKKGKNTQVVSKKNKK). The segment covering 280-290 (NTQVVSKKNKK) has biased composition (polar residues).

This sequence belongs to the OXA1/ALB3/YidC family. Type 2 subfamily.

The protein localises to the cell membrane. Its function is as follows. Required for the insertion and/or proper folding and/or complex formation of integral membrane proteins into the membrane. Involved in integration of membrane proteins that insert both dependently and independently of the Sec translocase complex, as well as at least some lipoproteins. This chain is Membrane protein insertase YidC 1, found in Staphylococcus epidermidis (strain ATCC 12228 / FDA PCI 1200).